Consider the following 603-residue polypeptide: NADH-ubiquinone oxidoreductase chain 5 (603 aa).

Helical transmembrane passes span 4-24, 38-58, 87-107, 122-142, 144-160, 171-191, 211-233, 241-261, 272-292, 301-320, 325-347, 370-390, 407-429, 457-477, 482-502, and 583-603; these read YTTM…TTLI, SIIA…MCLD, MTFI…SLWY, LIFL…QLFI, WEGV…WWYA, AILY…WFLL, TPLL…HPWL, TPVS…FLLI, LIQT…AICA, IVAF…IGIN, AFLH…GSII, STSL…TGFY, WALS…MILL, LTIG…PMST, IPLY…LTAL, and MIKL…LLIM.

This sequence belongs to the complex I subunit 5 family. In terms of assembly, core subunit of respiratory chain NADH dehydrogenase (Complex I) which is composed of 45 different subunits.

The protein resides in the mitochondrion inner membrane. The catalysed reaction is a ubiquinone + NADH + 5 H(+)(in) = a ubiquinol + NAD(+) + 4 H(+)(out). In terms of biological role, core subunit of the mitochondrial membrane respiratory chain NADH dehydrogenase (Complex I) which catalyzes electron transfer from NADH through the respiratory chain, using ubiquinone as an electron acceptor. Essential for the catalytic activity and assembly of complex I. In Pan paniscus (Pygmy chimpanzee), this protein is NADH-ubiquinone oxidoreductase chain 5 (MT-ND5).